A 180-amino-acid polypeptide reads, in one-letter code: Crossover junction endodeoxyribonuclease RuvC (180 aa).

Residues Asp-7, Glu-66, and Asp-138 contribute to the active site. 3 residues coordinate Mg(2+): Asp-7, Glu-66, and Asp-138.

The protein belongs to the RuvC family. In terms of assembly, homodimer which binds Holliday junction (HJ) DNA. The HJ becomes 2-fold symmetrical on binding to RuvC with unstacked arms; it has a different conformation from HJ DNA in complex with RuvA. In the full resolvosome a probable DNA-RuvA(4)-RuvB(12)-RuvC(2) complex forms which resolves the HJ. It depends on Mg(2+) as a cofactor.

It is found in the cytoplasm. It carries out the reaction Endonucleolytic cleavage at a junction such as a reciprocal single-stranded crossover between two homologous DNA duplexes (Holliday junction).. The RuvA-RuvB-RuvC complex processes Holliday junction (HJ) DNA during genetic recombination and DNA repair. Endonuclease that resolves HJ intermediates. Cleaves cruciform DNA by making single-stranded nicks across the HJ at symmetrical positions within the homologous arms, yielding a 5'-phosphate and a 3'-hydroxyl group; requires a central core of homology in the junction. The consensus cleavage sequence is 5'-(A/T)TT(C/G)-3'. Cleavage occurs on the 3'-side of the TT dinucleotide at the point of strand exchange. HJ branch migration catalyzed by RuvA-RuvB allows RuvC to scan DNA until it finds its consensus sequence, where it cleaves and resolves the cruciform DNA. In Burkholderia pseudomallei (strain 668), this protein is Crossover junction endodeoxyribonuclease RuvC.